The following is an 855-amino-acid chain: Pentatricopeptide repeat-containing protein At1g74750 (855 aa).

The segment at 21–40 (GSRPSAADGNSCTCAEDESG) is disordered. PPR repeat units follow at residues 358–392 (DGHT…GCKP), 393–427 (NTVT…GCEP), 428–462 (DRVT…GLSP), 463–497 (DTFT…GCTP), 498–532 (NLVT…GFQP), 533–567 (DKVT…NWVP), 568–602 (DEPV…GLRP), and 603–637 (NVPT…GLHP). One can recognise a Smr domain in the interval 755 to 838 (INLHVMSEGT…NSGCFVGSGE (84 aa)).

It belongs to the PPR family. P subfamily.

This Arabidopsis thaliana (Mouse-ear cress) protein is Pentatricopeptide repeat-containing protein At1g74750.